We begin with the raw amino-acid sequence, 430 residues long: Serine--tRNA ligase (430 aa).

An L-serine-binding site is contributed by 237–239; the sequence is TAE. 268-270 contributes to the ATP binding site; the sequence is RRE. Glu291 provides a ligand contact to L-serine. 355-358 serves as a coordination point for ATP; the sequence is EISS. Ser391 lines the L-serine pocket.

It belongs to the class-II aminoacyl-tRNA synthetase family. Type-1 seryl-tRNA synthetase subfamily. As to quaternary structure, homodimer. The tRNA molecule binds across the dimer.

It is found in the cytoplasm. The catalysed reaction is tRNA(Ser) + L-serine + ATP = L-seryl-tRNA(Ser) + AMP + diphosphate + H(+). The enzyme catalyses tRNA(Sec) + L-serine + ATP = L-seryl-tRNA(Sec) + AMP + diphosphate + H(+). It participates in aminoacyl-tRNA biosynthesis; selenocysteinyl-tRNA(Sec) biosynthesis; L-seryl-tRNA(Sec) from L-serine and tRNA(Sec): step 1/1. Catalyzes the attachment of serine to tRNA(Ser). Is also able to aminoacylate tRNA(Sec) with serine, to form the misacylated tRNA L-seryl-tRNA(Sec), which will be further converted into selenocysteinyl-tRNA(Sec). This chain is Serine--tRNA ligase, found in Magnetococcus marinus (strain ATCC BAA-1437 / JCM 17883 / MC-1).